We begin with the raw amino-acid sequence, 79 residues long: Probable 26S proteasome complex subunit sem1 (79 aa).

Over residues 1–21 (MSAPDKEKEKEKEETNNKSED) the composition is skewed to basic and acidic residues. Residues 1–30 (MSAPDKEKEKEKEETNNKSEDLGLLEEDDE) are disordered. Residue serine 19 is modified to Phosphoserine.

It belongs to the DSS1/SEM1 family. As to quaternary structure, part of the 26S proteasome.

Its function is as follows. Subunit of the 26S proteasome which plays a role in ubiquitin-dependent proteolysis. The protein is Probable 26S proteasome complex subunit sem1 of Drosophila melanogaster (Fruit fly).